Here is a 271-residue protein sequence, read N- to C-terminus: MVSLEMLKEHETVRTAPVSEAEALVDVRGLSLWYGKKQALYDISVRFPRNQVTAIIGPSGCGKSTLLRSLNRMNDLVPGVRVEGEVLYEGVNIYDPRVDPVAVRRHIGMVFQKPNPFPKTIFENVAFGLRLMGVKGSELEDRVVEALKRAALWEEVKDRFKKESGLRLSGGQQQRLCIARAIAVEPPLLLMDEPTSALDPIATQAIEDLILELKERYTVVIVTHNMQQAARVSDRTLFMHLGVLVEEGPTEVIFTKPKHPYTEAYITGRFG.

In terms of domain architecture, ABC transporter spans 13–266 (VRTAPVSEAE…PKHPYTEAYI (254 aa)). 57–64 (GPSGCGKS) is an ATP binding site.

The protein belongs to the ABC transporter superfamily. Phosphate importer (TC 3.A.1.7) family. In terms of assembly, the complex is composed of two ATP-binding proteins (PstB), two transmembrane proteins (PstC and PstA) and a solute-binding protein (PstS).

It localises to the cell inner membrane. The catalysed reaction is phosphate(out) + ATP + H2O = ADP + 2 phosphate(in) + H(+). Functionally, part of the ABC transporter complex PstSACB involved in phosphate import. Responsible for energy coupling to the transport system. This Thermus thermophilus (strain ATCC 27634 / DSM 579 / HB8) protein is Phosphate import ATP-binding protein PstB.